The sequence spans 462 residues: Nitrogenase iron-iron protein beta chain (462 aa).

Residues C20, C45, C104, and S143 each coordinate [8Fe-7S] cluster.

The protein belongs to the NifD/NifK/NifE/NifN family. In terms of assembly, hexamer of two alpha, two beta, and two delta chains. [8Fe-7S] cluster serves as cofactor.

It catalyses the reaction N2 + 8 reduced [2Fe-2S]-[ferredoxin] + 16 ATP + 16 H2O = H2 + 8 oxidized [2Fe-2S]-[ferredoxin] + 2 NH4(+) + 16 ADP + 16 phosphate + 6 H(+). This iron-iron protein is part of the nitrogenase complex that catalyzes the key enzymatic reactions in nitrogen fixation. Other nitrogenase complexes utilize a molybdenum-iron protein or a vanadium-iron protein. This chain is Nitrogenase iron-iron protein beta chain (anfK), found in Azotobacter vinelandii.